The primary structure comprises 107 residues: Putative ankyrin repeat protein L14 (107 aa).

ANK repeat units lie at residues 19-48 (DNNY…NIRA), 49-78 (DNDC…NIRA), and 80-107 (NDCA…AVLS).

The protein is Putative ankyrin repeat protein L14 of Acanthamoeba polyphaga (Amoeba).